The chain runs to 239 residues: 4-hydroxy-tetrahydrodipicolinate reductase (239 aa).

NAD(+) contacts are provided by residues Asp-32, 73-75, and 98-101; these read GTT and ASNF. His-133 acts as the Proton donor/acceptor in catalysis. Residue His-134 participates in (S)-2,3,4,5-tetrahydrodipicolinate binding. Lys-137 (proton donor) is an active-site residue. 143 to 144 lines the (S)-2,3,4,5-tetrahydrodipicolinate pocket; sequence GT.

It belongs to the DapB family.

It is found in the cytoplasm. It catalyses the reaction (S)-2,3,4,5-tetrahydrodipicolinate + NAD(+) + H2O = (2S,4S)-4-hydroxy-2,3,4,5-tetrahydrodipicolinate + NADH + H(+). It carries out the reaction (S)-2,3,4,5-tetrahydrodipicolinate + NADP(+) + H2O = (2S,4S)-4-hydroxy-2,3,4,5-tetrahydrodipicolinate + NADPH + H(+). It participates in amino-acid biosynthesis; L-lysine biosynthesis via DAP pathway; (S)-tetrahydrodipicolinate from L-aspartate: step 4/4. In terms of biological role, catalyzes the conversion of 4-hydroxy-tetrahydrodipicolinate (HTPA) to tetrahydrodipicolinate. The protein is 4-hydroxy-tetrahydrodipicolinate reductase of Christiangramia forsetii (strain DSM 17595 / CGMCC 1.15422 / KT0803) (Gramella forsetii).